The primary structure comprises 78 residues: Large ribosomal subunit protein bL28 (78 aa).

The protein belongs to the bacterial ribosomal protein bL28 family.

This Prochlorococcus marinus (strain SARG / CCMP1375 / SS120) protein is Large ribosomal subunit protein bL28.